The sequence spans 129 residues: UPF0225 protein XC_4246 (129 aa).

Belongs to the UPF0225 family.

This chain is UPF0225 protein XC_4246, found in Xanthomonas campestris pv. campestris (strain 8004).